Consider the following 545-residue polypeptide: Afadin- and alpha-actinin-binding protein B (545 aa).

Coiled coils occupy residues 106 to 287 and 358 to 442; these read RSKE…SQRK and ARGD…AIRL. A disordered region spans residues 497–545; the sequence is HDRHLASSGDHYQRPRKTLPITPSSKHSLTQRESVAWRDSSISPNGTDF. Polar residues-rich tracts occupy residues 517 to 529 and 536 to 545; these read ITPS…TQRE and SSISPNGTDF.

The protein belongs to the ADIP family. As to quaternary structure, interacts with WRAP73.

It is found in the cell junction. The protein resides in the adherens junction. It localises to the cytoplasm. Its subcellular location is the cytoskeleton. The protein localises to the microtubule organizing center. It is found in the centrosome. The protein resides in the centriolar satellite. Its function is as follows. Belongs to an adhesion system, which plays a role in the organization of homotypic, interneuronal and heterotypic cell-cell adherens junctions (AJs). Involved in cell movement. Acts as a centrosome maturation factor, probably by maintaining the integrity of the pericentriolar material and proper microtubule nucleation at mitotic spindle poles. The function seems to implicate at least in part WRAP73; the SSX2IP:WRAP73 complex is proposed to act as regulator of spindle anchoring at the mitotic centrosome. This Xenopus laevis (African clawed frog) protein is Afadin- and alpha-actinin-binding protein B (ssx2ip-b).